The following is a 553-amino-acid chain: Membrane protein insertase YidC (553 aa).

The next 5 membrane-spanning stretches (helical) occupy residues 7-24 (VLWVIFFMSAVMLYDNWQ), 365-385 (WGWAIVLLTLLIKAVFFPLSA), 435-455 (LPVVIQIPVFISLYWVLLASV), 474-494 (PYFILPVLMAVSMYVQTSLNP), and 509-529 (PIAFSVMFFFFPAGLVLYYVV).

The protein belongs to the OXA1/ALB3/YidC family. Type 1 subfamily. In terms of assembly, interacts with the Sec translocase complex via SecD. Specifically interacts with transmembrane segments of nascent integral membrane proteins during membrane integration.

The protein resides in the cell inner membrane. Its function is as follows. Required for the insertion and/or proper folding and/or complex formation of integral membrane proteins into the membrane. Involved in integration of membrane proteins that insert both dependently and independently of the Sec translocase complex, as well as at least some lipoproteins. Aids folding of multispanning membrane proteins. This Burkholderia multivorans (strain ATCC 17616 / 249) protein is Membrane protein insertase YidC.